Here is a 357-residue protein sequence, read N- to C-terminus: Peptide chain release factor 1 (357 aa).

N5-methylglutamine is present on glutamine 236.

It belongs to the prokaryotic/mitochondrial release factor family. Methylated by PrmC. Methylation increases the termination efficiency of RF1.

The protein resides in the cytoplasm. Functionally, peptide chain release factor 1 directs the termination of translation in response to the peptide chain termination codons UAG and UAA. In Mycobacterium avium (strain 104), this protein is Peptide chain release factor 1.